The primary structure comprises 322 residues: 1-aminocyclopropane-1-carboxylate oxidase 1 (322 aa).

Positions 159–259 constitute a Fe2OG dioxygenase domain; that stretch reads PTFGTKVSSY…RMSIASFYNP (101 aa). The Fe cation site is built by H183, D185, and H240.

This sequence belongs to the iron/ascorbate-dependent oxidoreductase family. Fe cation serves as cofactor.

The enzyme catalyses 1-aminocyclopropane-1-carboxylate + L-ascorbate + O2 = ethene + L-dehydroascorbate + hydrogen cyanide + CO2 + 2 H2O. It participates in alkene biosynthesis; ethylene biosynthesis via S-adenosyl-L-methionine; ethylene from S-adenosyl-L-methionine: step 2/2. The chain is 1-aminocyclopropane-1-carboxylate oxidase 1 (ACO1) from Oryza sativa subsp. japonica (Rice).